Reading from the N-terminus, the 284-residue chain is 2-dehydro-3-deoxyphosphooctonate aldolase (284 aa).

Belongs to the KdsA family.

It localises to the cytoplasm. The enzyme catalyses D-arabinose 5-phosphate + phosphoenolpyruvate + H2O = 3-deoxy-alpha-D-manno-2-octulosonate-8-phosphate + phosphate. It participates in carbohydrate biosynthesis; 3-deoxy-D-manno-octulosonate biosynthesis; 3-deoxy-D-manno-octulosonate from D-ribulose 5-phosphate: step 2/3. The protein operates within bacterial outer membrane biogenesis; lipopolysaccharide biosynthesis. This is 2-dehydro-3-deoxyphosphooctonate aldolase from Edwardsiella ictaluri (strain 93-146).